We begin with the raw amino-acid sequence, 668 residues long: NADH-ubiquinone oxidoreductase chain 5 (668 aa).

The next 18 helical transmembrane spans lie at 1 to 21, 31 to 51, 81 to 101, 111 to 131, 133 to 153, 178 to 198, 211 to 231, 251 to 271, 283 to 303, 311 to 331, 339 to 359, 375 to 395, 421 to 441, 462 to 482, 519 to 539, 566 to 586, 629 to 649, and 650 to 668; these read MYII…LFGH, IAVG…YEIL, LTSI…LYSM, TRFF…VTAD, FVQL…LINF, LFFG…SVIF, LLGY…IGVV, TPVS…FLVL, ILNI…TIGI, VIAY…GLLN, LTTH…VIHG, LMPL…GFPF, AIIG…LLIL, TNMV…GYLT, LLPL…YFNL, FDFL…YDVM, IVQA…IGFL, and YVEL…PKIK.

The protein belongs to the complex I subunit 5 family.

Its subcellular location is the mitochondrion inner membrane. It catalyses the reaction a ubiquinone + NADH + 5 H(+)(in) = a ubiquinol + NAD(+) + 4 H(+)(out). In terms of biological role, core subunit of the mitochondrial membrane respiratory chain NADH dehydrogenase (Complex I) that is believed to belong to the minimal assembly required for catalysis. Complex I functions in the transfer of electrons from NADH to the respiratory chain. The immediate electron acceptor for the enzyme is believed to be ubiquinone. The polypeptide is NADH-ubiquinone oxidoreductase chain 5 (nad5) (Dictyostelium citrinum (Slime mold)).